The chain runs to 424 residues: Type II methyltransferase M.BspRI (424 aa).

An SAM-dependent MTase C5-type domain is found at 58-408 (FNVLSLFCGA…KSIAQFAADY (351 aa)). C156 acts as the S-methylcysteine intermediate in catalysis. Residue C181 is modified to S-methylcysteine; by autocatalysis.

This sequence belongs to the class I-like SAM-binding methyltransferase superfamily. C5-methyltransferase family. In terms of assembly, monomer. Post-translationally, in the absence of DNA, can self-methylate two cysteine residues.

The enzyme catalyses a 2'-deoxycytidine in DNA + S-adenosyl-L-methionine = a 5-methyl-2'-deoxycytidine in DNA + S-adenosyl-L-homocysteine + H(+). A methylase, recognizes the double-stranded sequence 5'-GGCC-3', methylates C-3 on both strands, and protects the DNA from cleavage by the BspRI endonuclease. The protein is Type II methyltransferase M.BspRI (bspRIM) of Lysinibacillus sphaericus (Bacillus sphaericus).